A 621-amino-acid chain; its full sequence is Probable potassium transport system protein Kup 2 (621 aa).

Helical transmembrane passes span 12–32 (ITVA…LYAL), 52–72 (VLSL…VAII), 101–121 (WIIT…SMIT), 138–158 (PDLK…LFFI), 166–186 (VGKL…ILGL), 213–233 (GLAF…EALY), 249–269 (FGFV…LLLI), 286–306 (ALIP…QAVI), 338–358 (IYVP…VIGF), 370–390 (IAVT…MVLM), 396–416 (LLVA…FAAN), and 420–440 (IPEG…VLTT).

It belongs to the HAK/KUP transporter (TC 2.A.72) family.

It is found in the cell inner membrane. The catalysed reaction is K(+)(in) + H(+)(in) = K(+)(out) + H(+)(out). Functionally, transport of potassium into the cell. Likely operates as a K(+):H(+) symporter. The chain is Probable potassium transport system protein Kup 2 from Dechloromonas aromatica (strain RCB).